The primary structure comprises 501 residues: Cytochrome P450 2J6 (501 aa).

Heme is bound at residue Cys-447.

The protein belongs to the cytochrome P450 family. It depends on heme as a cofactor.

The protein localises to the endoplasmic reticulum membrane. Its subcellular location is the microsome membrane. The enzyme catalyses an organic molecule + reduced [NADPH--hemoprotein reductase] + O2 = an alcohol + oxidized [NADPH--hemoprotein reductase] + H2O + H(+). The protein is Cytochrome P450 2J6 (Cyp2j6) of Mus musculus (Mouse).